A 226-amino-acid chain; its full sequence is UPF0758 protein Sca_1264 (226 aa).

The 123-residue stretch at 102 to 224 (KITSPQDAAD…YLSMVEGGYF (123 aa)) folds into the MPN domain. Histidine 173, histidine 175, and aspartate 186 together coordinate Zn(2+). The short motif at 173–186 (HNHPSGDVTPSKED) is the JAMM motif element.

It belongs to the UPF0758 family.

This is UPF0758 protein Sca_1264 from Staphylococcus carnosus (strain TM300).